A 466-amino-acid chain; its full sequence is Ribosome biogenesis protein YTM1 (466 aa).

Positions 8–95 are ubiquitin-like (UBL) domain; the sequence is IKINFFTNEE…EASLNLEYTR (88 aa). The interval 105-466 is sufficient for interaction with ERB1 and association with 66S pre-ribosomes; sequence SFNNDDWISS…QINKGSDITK (362 aa). WD repeat units lie at residues 120 to 159, 161 to 199, 214 to 253, 291 to 331, 333 to 372, 381 to 421, and 431 to 466; these read PLSA…EKQY, GHSG…NIED, GHKA…MTTI, GHSQ…CVDT, TTGY…TTTE, GHTN…SLYT, and KGQD…DITK.

This sequence belongs to the WD repeat WDR12/YTM1 family. Component of the NOP7 complex, composed of ERB1, NOP7 and YTM1. The complex is held together by ERB1, which interacts with NOP7 via its N-terminal domain and with YTM1 via a high-affinity interaction between the seven-bladed beta-propeller domains of the 2 proteins. The NOP7 complex associates with the 66S pre-ribosome. Interacts (via UBL domain) with MDN1 (via VWFA/MIDAS domain).

Its subcellular location is the nucleus. It localises to the nucleolus. It is found in the nucleoplasm. In terms of biological role, component of the NOP7 complex, which is required for maturation of the 25S and 5.8S ribosomal RNAs and formation of the 60S ribosome. This chain is Ribosome biogenesis protein YTM1, found in Debaryomyces hansenii (strain ATCC 36239 / CBS 767 / BCRC 21394 / JCM 1990 / NBRC 0083 / IGC 2968) (Yeast).